Here is a 295-residue protein sequence, read N- to C-terminus: Light-independent protochlorophyllide reductase iron-sulfur ATP-binding protein (295 aa).

Residues 39–44 (GIGKST) and Lys-68 contribute to the ATP site. Ser-43 contributes to the Mg(2+) binding site. The [4Fe-4S] cluster site is built by Cys-124 and Cys-158. 209 to 210 (NR) serves as a coordination point for ATP.

The protein belongs to the NifH/BchL/ChlL family. In terms of assembly, homodimer. Protochlorophyllide reductase is composed of three subunits; ChlL, ChlN and ChlB. Requires [4Fe-4S] cluster as cofactor.

The enzyme catalyses chlorophyllide a + oxidized 2[4Fe-4S]-[ferredoxin] + 2 ADP + 2 phosphate = protochlorophyllide a + reduced 2[4Fe-4S]-[ferredoxin] + 2 ATP + 2 H2O. It participates in porphyrin-containing compound metabolism; chlorophyll biosynthesis (light-independent). Component of the dark-operative protochlorophyllide reductase (DPOR) that uses Mg-ATP and reduced ferredoxin to reduce ring D of protochlorophyllide (Pchlide) to form chlorophyllide a (Chlide). This reaction is light-independent. The L component serves as a unique electron donor to the NB-component of the complex, and binds Mg-ATP. The protein is Light-independent protochlorophyllide reductase iron-sulfur ATP-binding protein of Prochlorococcus marinus (strain MIT 9215).